We begin with the raw amino-acid sequence, 252 residues long: Probable endonuclease 4 (252 aa).

Zn(2+) is bound by residues H56, H96, E129, D162, H165, H191, D204, H206, and E233.

The protein belongs to the AP endonuclease 2 family. The cofactor is Zn(2+).

The catalysed reaction is Endonucleolytic cleavage to 5'-phosphooligonucleotide end-products.. In terms of biological role, endonuclease IV plays a role in DNA repair. It cleaves phosphodiester bonds at apurinic or apyrimidinic (AP) sites, generating a 3'-hydroxyl group and a 5'-terminal sugar phosphate. The chain is Probable endonuclease 4 from Mycobacterium ulcerans (strain Agy99).